The chain runs to 131 residues: Peptide methionine sulfoxide reductase MsrB (131 aa).

Residues 8–130 form the MsrB domain; sequence LDTWREELTD…NSLSLKLVPR (123 aa). Zn(2+) is bound by residues C47, C50, C96, and C99. C119 functions as the Nucleophile in the catalytic mechanism.

The protein belongs to the MsrB Met sulfoxide reductase family. Zn(2+) is required as a cofactor.

The enzyme catalyses L-methionyl-[protein] + [thioredoxin]-disulfide + H2O = L-methionyl-(R)-S-oxide-[protein] + [thioredoxin]-dithiol. This is Peptide methionine sulfoxide reductase MsrB from Ectopseudomonas mendocina (strain ymp) (Pseudomonas mendocina).